Reading from the N-terminus, the 182-residue chain is Adenine phosphoribosyltransferase (182 aa).

It belongs to the purine/pyrimidine phosphoribosyltransferase family. In terms of assembly, homodimer.

It is found in the cytoplasm. It catalyses the reaction AMP + diphosphate = 5-phospho-alpha-D-ribose 1-diphosphate + adenine. It functions in the pathway purine metabolism; AMP biosynthesis via salvage pathway; AMP from adenine: step 1/1. Functionally, catalyzes a salvage reaction resulting in the formation of AMP, that is energically less costly than de novo synthesis. The chain is Adenine phosphoribosyltransferase from Pseudomonas paraeruginosa (strain DSM 24068 / PA7) (Pseudomonas aeruginosa (strain PA7)).